Consider the following 290-residue polypeptide: Fructose-1,6-bisphosphatase class 1 (290 aa).

Mg(2+) is bound by residues Glu78, Asp96, Leu98, and Asp99. Substrate is bound by residues Asp99–Ser102, Tyr201, and Lys226. Glu232 provides a ligand contact to Mg(2+).

Belongs to the FBPase class 1 family. Homotetramer. It depends on Mg(2+) as a cofactor.

The protein resides in the cytoplasm. The enzyme catalyses beta-D-fructose 1,6-bisphosphate + H2O = beta-D-fructose 6-phosphate + phosphate. It functions in the pathway carbohydrate biosynthesis; gluconeogenesis. The sequence is that of Fructose-1,6-bisphosphatase class 1 from Helicobacter pylori (strain J99 / ATCC 700824) (Campylobacter pylori J99).